A 326-amino-acid chain; its full sequence is Light-induced protein, chloroplastic (326 aa).

The N-terminal 63 residues, 1–63 (MASISSLNQI…TNPKPKFTAQ (63 aa)), are a transit peptide targeting the chloroplast.

This sequence belongs to the LIPC family. In terms of assembly, associates with the major light-harvesting antenna complex polypeptides of the PSII oxygen-evolving complex. As to expression, expressed in leaves.

Its subcellular location is the plastid. The protein localises to the chloroplast thylakoid membrane. Functionally, required for normal plant growth. May be both photoprotective and play an ancillary role in photosynthesis. May structurally stabilize thylakoids during osmotic and oxidative stress. In Solanum tuberosum (Potato), this protein is Light-induced protein, chloroplastic.